Consider the following 365-residue polypeptide: 3-dehydroquinate synthase (365 aa).

Residues 107–111 (GVIGD), 131–132 (TT), lysine 144, and lysine 153 contribute to the NAD(+) site. Positions 186, 251, and 268 each coordinate Zn(2+).

The protein belongs to the sugar phosphate cyclases superfamily. Dehydroquinate synthase family. Co(2+) is required as a cofactor. It depends on Zn(2+) as a cofactor. The cofactor is NAD(+).

The protein localises to the cytoplasm. It catalyses the reaction 7-phospho-2-dehydro-3-deoxy-D-arabino-heptonate = 3-dehydroquinate + phosphate. Its pathway is metabolic intermediate biosynthesis; chorismate biosynthesis; chorismate from D-erythrose 4-phosphate and phosphoenolpyruvate: step 2/7. Its function is as follows. Catalyzes the conversion of 3-deoxy-D-arabino-heptulosonate 7-phosphate (DAHP) to dehydroquinate (DHQ). The protein is 3-dehydroquinate synthase of Picosynechococcus sp. (strain ATCC 27264 / PCC 7002 / PR-6) (Agmenellum quadruplicatum).